Consider the following 155-residue polypeptide: MITTEGTRSLETLDIEKLLSILPHRYPFLLIDRIVEIDGEQEAIGIKNITINEPHFVGHFPAKPVMPGVLILEAMAQTAGAISLLRLGNKQTNLVYLMTVDNAKFRKPVIPGDQLKIHVRLLKKRSGMRRFSCIAEVKGVRVAEAEIAAMILEKE.

His59 is a catalytic residue.

Belongs to the thioester dehydratase family. FabZ subfamily.

It localises to the cytoplasm. The enzyme catalyses a (3R)-hydroxyacyl-[ACP] = a (2E)-enoyl-[ACP] + H2O. Its function is as follows. Involved in unsaturated fatty acids biosynthesis. Catalyzes the dehydration of short chain beta-hydroxyacyl-ACPs and long chain saturated and unsaturated beta-hydroxyacyl-ACPs. This is 3-hydroxyacyl-[acyl-carrier-protein] dehydratase FabZ from Bartonella henselae (strain ATCC 49882 / DSM 28221 / CCUG 30454 / Houston 1) (Rochalimaea henselae).